A 281-amino-acid polypeptide reads, in one-letter code: Bifunctional protein FolD (281 aa).

NADP(+) contacts are provided by residues 165-167 (GRS) and S190.

This sequence belongs to the tetrahydrofolate dehydrogenase/cyclohydrolase family. In terms of assembly, homodimer.

The enzyme catalyses (6R)-5,10-methylene-5,6,7,8-tetrahydrofolate + NADP(+) = (6R)-5,10-methenyltetrahydrofolate + NADPH. It carries out the reaction (6R)-5,10-methenyltetrahydrofolate + H2O = (6R)-10-formyltetrahydrofolate + H(+). Its pathway is one-carbon metabolism; tetrahydrofolate interconversion. Functionally, catalyzes the oxidation of 5,10-methylenetetrahydrofolate to 5,10-methenyltetrahydrofolate and then the hydrolysis of 5,10-methenyltetrahydrofolate to 10-formyltetrahydrofolate. This Polaromonas naphthalenivorans (strain CJ2) protein is Bifunctional protein FolD.